The sequence spans 253 residues: Chloride intracellular channel protein 4 (253 aa).

Ala2 is subject to N-acetylalanine. A required for insertion into the membrane region spans residues 2 to 101 (ALSMPLNGLK…EEFLEEVLCP (100 aa)). Ser4 is modified (phosphoserine). Lys24 is subject to N6-acetyllysine. Positions 35–38 (CPFS) match the G-site motif. A helical transmembrane segment spans residues 37–57 (FSQRLFMILWLKGVVFSVTTV). Residues 81 to 244 (NSEVKTDVNK…PSDKEVEIAY (164 aa)) form the GST C-terminal domain. Lys130 carries the N6-acetyllysine modification. Residues Ser132, Ser167, and Ser236 each carry the phosphoserine modification. Position 244 is a phosphotyrosine (Tyr244).

This sequence belongs to the chloride channel CLIC family. Monomer. Interacts with HRH30. Interacts with AKAP9. As to expression, detected in blood vessels in the retina (at protein level). Expressed to the greatest extent in vivo in heart, lung, liver, kidney, and skin.

The protein localises to the cytoplasm. Its subcellular location is the cytoskeleton. It is found in the microtubule organizing center. It localises to the centrosome. The protein resides in the cytoplasmic vesicle membrane. The protein localises to the nucleus. Its subcellular location is the cell membrane. It is found in the mitochondrion. It localises to the cell junction. It carries out the reaction chloride(in) = chloride(out). The catalysed reaction is thiocyanate(in) = thiocyanate(out). It catalyses the reaction nitrate(in) = nitrate(out). The enzyme catalyses iodide(out) = iodide(in). It carries out the reaction bromide(in) = bromide(out). The catalysed reaction is fluoride(in) = fluoride(out). It catalyses the reaction choline(out) = choline(in). In the soluble state, catalyzes glutaredoxin-like thiol disulfide exchange reactions with reduced glutathione as electron donor. Can insert into membranes and form voltage-dependent multi-ion conductive channels. Membrane insertion seems to be redox-regulated and may occur only under oxidizing conditions. Has alternate cellular functions like a potential role in angiogenesis or in maintaining apical-basolateral membrane polarity during mitosis and cytokinesis. Could also promote endothelial cell proliferation and regulate endothelial morphogenesis (tubulogenesis). Promotes cell-surface expression of HRH3. In Mus musculus (Mouse), this protein is Chloride intracellular channel protein 4 (Clic4).